We begin with the raw amino-acid sequence, 250 residues long: Small ribosomal subunit protein uS3 (250 aa).

A KH type-2 domain is found at 39-111 (IRTLIKNHYP…KVQINIFEVK (73 aa)).

This sequence belongs to the universal ribosomal protein uS3 family. Part of the 30S ribosomal subunit. Forms a tight complex with proteins S10 and S14.

Functionally, binds the lower part of the 30S subunit head. Binds mRNA in the 70S ribosome, positioning it for translation. This Phytoplasma vitis (Flavescence doree phytoplasma) protein is Small ribosomal subunit protein uS3.